The following is a 186-amino-acid chain: Elongation factor P (186 aa).

Belongs to the elongation factor P family.

The protein resides in the cytoplasm. The protein operates within protein biosynthesis; polypeptide chain elongation. Its function is as follows. Involved in peptide bond synthesis. Stimulates efficient translation and peptide-bond synthesis on native or reconstituted 70S ribosomes in vitro. Probably functions indirectly by altering the affinity of the ribosome for aminoacyl-tRNA, thus increasing their reactivity as acceptors for peptidyl transferase. The protein is Elongation factor P of Acidobacterium capsulatum (strain ATCC 51196 / DSM 11244 / BCRC 80197 / JCM 7670 / NBRC 15755 / NCIMB 13165 / 161).